The sequence spans 233 residues: MREHRPIIALDFPSFEAVKEFLALFPAEESLYLKVGMELYYAAGPEIVSYLKGLGHSVFLDLKLHDIPNTVKSAMKVLSQLGVDMTNVHAAGGVEMMKAAREGLGSQAKLIAVTQLTSTSEAQMQEFQNIQTSLQESVIHYAKKTAEAGLDGVVCSAQEVQVIKQATNPDFICLTPGIRPAGVAVGDQKRVMTPADAYQIGSDYIVVGRPITQAEDPVAAYHAIKDEWTQDWN.

Substrate contacts are provided by residues Asp11, Lys34, 61–70 (DLKLHDIPNT), Thr117, Arg179, Gln188, Gly208, and Arg209. Residue Lys63 is the Proton donor of the active site.

This sequence belongs to the OMP decarboxylase family. Type 1 subfamily. Homodimer.

The catalysed reaction is orotidine 5'-phosphate + H(+) = UMP + CO2. It functions in the pathway pyrimidine metabolism; UMP biosynthesis via de novo pathway; UMP from orotate: step 2/2. In terms of biological role, catalyzes the decarboxylation of orotidine 5'-monophosphate (OMP) to uridine 5'-monophosphate (UMP). The sequence is that of Orotidine 5'-phosphate decarboxylase from Streptococcus pneumoniae (strain P1031).